The primary structure comprises 261 residues: Carnitinyl-CoA dehydratase (261 aa).

E111 (nucleophile) is an active-site residue. E131 (proton acceptor) is an active-site residue.

The protein belongs to the enoyl-CoA hydratase/isomerase family.

It carries out the reaction (R)-carnitinyl-CoA = crotonobetainyl-CoA + H2O. The protein operates within amine and polyamine metabolism; carnitine metabolism. Its function is as follows. Catalyzes the reversible dehydration of L-carnitinyl-CoA to crotonobetainyl-CoA. The sequence is that of Carnitinyl-CoA dehydratase from Salmonella arizonae (strain ATCC BAA-731 / CDC346-86 / RSK2980).